The following is a 571-amino-acid chain: uncharacterized protein (571 aa).

This is an uncharacterized protein from Methanocaldococcus jannaschii (strain ATCC 43067 / DSM 2661 / JAL-1 / JCM 10045 / NBRC 100440) (Methanococcus jannaschii).